The chain runs to 83 residues: Kappa-actitoxin-Aer3a (83 aa).

The N-terminal stretch at 1–22 (MKGQMIICLVLIALCMSVVVMA) is a signal peptide. Positions 23–49 (QNLRAEELEKANPKDERVRSFERNQKR) are excised as a propeptide. Residues 51 to 83 (CKDYLPKSECTQFRCRTSMKYKYTNCKKTCGTC) enclose the ShKT domain. 3 cysteine pairs are disulfide-bonded: Cys51/Cys83, Cys60/Cys76, and Cys65/Cys80.

This sequence belongs to the sea anemone type 1 potassium channel toxin family. Type 1a subfamily.

It is found in the secreted. It localises to the nematocyst. Specifically, dose-dependently and potently blocks the voltage-gated potassium channel Kv1.1/KCNA1 (Ki=1.6 pM). Moderately blocks potassium channel heterotetramers formed by 3 subunits of Kv1.1/KCNA1 and 1 subunit of Kv1.2/KCNA2 (Ki=56 nM) and weakly blocks those formed by 2 subunits of Kv1.1/KCNA1 and 2 subunits of Kv1.2/KCNA2 (Ki=14 nM). This Anemonia erythraea (Sea anemone) protein is Kappa-actitoxin-Aer3a.